The following is a 138-amino-acid chain: Transcription antitermination protein NusB (138 aa).

Belongs to the NusB family.

Functionally, involved in transcription antitermination. Required for transcription of ribosomal RNA (rRNA) genes. Binds specifically to the boxA antiterminator sequence of the ribosomal RNA (rrn) operons. The chain is Transcription antitermination protein NusB from Yersinia pseudotuberculosis serotype O:1b (strain IP 31758).